We begin with the raw amino-acid sequence, 238 residues long: 5'-deoxynucleotidase YBR242W (238 aa).

In terms of domain architecture, HD spans Ile77–Leu183. The a divalent metal cation site is built by His80, His108, Asp109, Glu112, Asp117, Ile118, and Asp178.

It belongs to the HDDC2 family. As to quaternary structure, homodimer. Mn(2+) serves as cofactor. Requires Co(2+) as cofactor. Mg(2+) is required as a cofactor.

The catalysed reaction is a 2'-deoxyribonucleoside 5'-phosphate + H2O = a 2'-deoxyribonucleoside + phosphate. Its function is as follows. Catalyzes the dephosphorylation of the nucleoside 5'-monophosphates deoxyadenosine monophosphate (dAMP), deoxycytidine monophosphate (dCMP), deoxyguanosine monophosphate (dGMP) and deoxythymidine monophosphate (dTMP). In Saccharomyces cerevisiae (strain ATCC 204508 / S288c) (Baker's yeast), this protein is 5'-deoxynucleotidase YBR242W.